A 317-amino-acid polypeptide reads, in one-letter code: uncharacterized protein (317 aa).

To M.avium MAV169.

This is an uncharacterized protein from Mycobacterium tuberculosis (strain CDC 1551 / Oshkosh).